The sequence spans 440 residues: V-type ATP synthase beta chain (440 aa).

This sequence belongs to the ATPase alpha/beta chains family.

In terms of biological role, produces ATP from ADP in the presence of a proton gradient across the membrane. The V-type beta chain is a regulatory subunit. This is V-type ATP synthase beta chain from Geotalea uraniireducens (strain Rf4) (Geobacter uraniireducens).